The sequence spans 250 residues: Petrobactin import ATP-binding protein FatE (250 aa).

The ABC transporter domain occupies 2-236; the sequence is IKIDNVKKFY…TLLTDIFETR (235 aa). 34–41 serves as a coordination point for ATP; the sequence is GPNGAGKS.

It belongs to the ABC transporter superfamily. The complex is composed of two ATP-binding proteins (FatE), two transmembrane proteins (FatC and FatD) and a solute-binding protein (FpuA).

The protein localises to the cell membrane. The enzyme catalyses a Fe(III)-siderophore(out) + ATP + H2O = a Fe(III)-siderophore(in) + ADP + phosphate + H(+). Functionally, part of an ABC transporter complex involved in ferric-petrobactin uptake. Probably responsible for energy coupling to the transport system. This chain is Petrobactin import ATP-binding protein FatE, found in Bacillus anthracis.